Consider the following 107-residue polypeptide: CLAVATA3/ESR (CLE)-related protein 10 (107 aa).

A signal peptide spans 1–23 (MKTNRNRPINILIVFFLLTTARA). Residues asparagine 27 and asparagine 30 are each glycosylated (N-linked (GlcNAc...) asparagine). Positions 73–107 (SRQPLFSPPPPPTEIDQRYGVEKRLVPSGPNPLHN) are disordered. Basic and acidic residues predominate over residues 87-97 (IDQRYGVEKRL). Hydroxyproline occurs at positions 99 and 102. An O-linked (Ara...) hydroxyproline glycan is attached at proline 102.

This sequence belongs to the CLV3/ESR signal peptide family. Post-translationally, the O-glycosylation (arabinosylation) of the hydroxyproline Pro-102 enhances binding affinity of the CLE10p peptide for its receptor. In terms of tissue distribution, expressed in stems, apex, leaves, flowers, siliques and pollen.

Its subcellular location is the secreted. The protein localises to the extracellular space. Extracellular signal peptide that regulates cell fate. Represses root apical meristem maintenance. Regulates the transition of protophloem cells from proliferation to differentiation, thus impinging on postembryonic growth capacity of the root meristem; this signaling pathway requires CRN and CLV2. The chain is CLAVATA3/ESR (CLE)-related protein 10 from Arabidopsis thaliana (Mouse-ear cress).